A 908-amino-acid polypeptide reads, in one-letter code: MFGKLLTKVFGSRNDRTLKGLQKIVISINALEADYEKLTDEALKAKTAEFRERLAAGASLDSIMAEAFATVREASKRVFDMRHFDVQLLGGMVLDSNRIAEMRTGEGKTLTATLPAYLNALTGKGVHVITVNDYLARRDAENNRPLFEFLGLTVGINVAGLGQHEKKAAYNADITYGTNNEFGFDYLRDNMAFSPQERVQRPLHYALIDEVDSILIDEARTPLIISGAAEDSSELYIKINTLIPNLIRQDKEDTEEYVGEGDYSIDEKAKQVHFTERGQEKVENLLIERGMLAEGDSLYSAANISLLHHVNAALRAHTLFERDVDYIVQDNEVIIVDEHTGRTMPGRRWSEGLHQAVEAKEGVHIQNENQTLASITFQNYFRQYEKLAGMTGTADTEAFEFQHIYGLDTVVVPTNRPMVRKDMADLVYLTADEKYQAIIKDIKDCRERGQPVLVGTVSIEQSELLARLMVQEKIPHEVLNAKFHEREAEIVAQAGRTGSVTIATNMAGRGTDIVLGGNWNMEIDELDNPTAEQKAKIKADWQIRHDEVVAAGGLHILGTERHESRRIDNQLRGRAGRQGDAGSSRFYLSMEDSLMRIFASDRVSGMMKKLGMEEGEAIEHPWVSRAIENAQRKVEARNFDIRKQLLEFDDVANDQRQVVYAQRNELMDAESIEDTIQNIQDDVIGAVIDQYIPPQSVEELWDIPGLEQRLHQEFMLKLPIQEWLDKEDDLHEESLRERIITAWGDAYKAKEEMVGAQVLRQFEKAVMLQTLDGLWKEHLAAMDHLRQGIHLRGYAQKNPKQEYKRESFELFQQLLNTLKHDVISVLSKVQVQAQSDVEEMEARRREEDAKIQRDYQHAAAESLVGSSDEHEAVTAQAPMIRDGEKVGRNDPCPCGSGRKYKQCHGKLS.

ATP-binding positions include Gln-87, 105 to 109, and Asp-512; that span reads GEGKT. The interval 860–908 is disordered; it reads AESLVGSSDEHEAVTAQAPMIRDGEKVGRNDPCPCGSGRKYKQCHGKLS. Positions 892, 894, 903, and 904 each coordinate Zn(2+). The span at 898–908 shows a compositional bias: basic residues; it reads RKYKQCHGKLS.

This sequence belongs to the SecA family. In terms of assembly, monomer and homodimer. Part of the essential Sec protein translocation apparatus which comprises SecA, SecYEG and auxiliary proteins SecDF-YajC and YidC. The cofactor is Zn(2+).

Its subcellular location is the cell inner membrane. The protein localises to the cytoplasm. The catalysed reaction is ATP + H2O + cellular proteinSide 1 = ADP + phosphate + cellular proteinSide 2.. Part of the Sec protein translocase complex. Interacts with the SecYEG preprotein conducting channel. Has a central role in coupling the hydrolysis of ATP to the transfer of proteins into and across the cell membrane, serving both as a receptor for the preprotein-SecB complex and as an ATP-driven molecular motor driving the stepwise translocation of polypeptide chains across the membrane. This Shewanella baltica (strain OS155 / ATCC BAA-1091) protein is Protein translocase subunit SecA.